A 907-amino-acid polypeptide reads, in one-letter code: MESRIWCLVVCVNLCIVCLGAAVSSSSTRGTSATHSHHSSHTTSAAHSRSGSVSQRVTSSQTVSHGVNETIYNTTLKYGDVVGVNTTKYPYRVCSMAQGTDLIRFERNIVCTSMKPINEDLDEGIMVVYKRNIVAHTFKVRVYQKVLTFRRSYAYIHTTYLLGSNTEYVAPPMWEIHHINSHSQCYSSYSRVIAGTVFVAYHRDSYENKTMQLMPDDYSNTHSTRYVTVKDQWHSRGSTWLYRETCNLNCMVTITTARSKYPYHFFATSTGDVVDISPFYNGTNRNASYFGENADKFFIFPNYTIVSDFGRPNSALETHRLVAFLERADSVISWDIQDEKNVTCQLTFWEASERTIRSEAEDSYHFSSAKMTATFLSKKQEVNMSDSALDCVRDEAINKLQQIFNTSYNQTYEKYGNVSVFETTGGLVVFWQGIKQKSLVELERLANRSSLNLTHNRTKRSTDGNNATHLSNMESVHNLVYAQLQFTYDTLRGYINRALAQIAEAWCVDQRRTLEVFKELSKINPSAILSAIYNKPIAARFMGDVLGLASCVTINQTSVKVLRDMNVKESPGRCYSRPVVIFNFANSSYVQYGQLGEDNEILLGNHRTEECQLPSLKIFIAGNSAYEYVDYLFKRMIDLSSISTVDSMIALDIDPLENTDFRVLELYSQKELRSSNVFDLEEIMREFNSYKQRVKYVEDKVVDPLPPYLKGLDDLMSGLGAAGKAVGVAIGAVGGAVASVVEGVATFLKNPFGAFTIILVAIAVVIITYLIYTRQRRLCTQPLQNLFPYLVSADGTTVTSGSTKDTSLQAPPSYEESVYNSGRKGPGPPSSDASTAAPPYTNEQAYQMLLALARLDAEQRAQQNGTDSLDGRTGTQDKGQKPNLLDRLRHRKNGYRHLKDSDEEENV.

Residues 1 to 24 form the signal peptide; sequence MESRIWCLVVCVNLCIVCLGAAVS. The Virion surface portion of the chain corresponds to 25 to 751; the sequence is SSSTRGTSAT…EGVATFLKNP (727 aa). The segment at 29-62 is disordered; the sequence is RGTSATHSHHSSHTTSAAHSRSGSVSQRVTSSQT. Over residues 41 to 62 the composition is skewed to low complexity; it reads HTTSAAHSRSGSVSQRVTSSQT. Asn68, Asn73, and Asn85 each carry an N-linked (GlcNAc...) asparagine; by host glycan. 4 disulfides stabilise this stretch: Cys94/Cys551, Cys111/Cys507, Cys185/Cys250, and Cys344/Cys391. Residues 152–158 form an involved in fusion and/or binding to host membrane region; that stretch reads SYAYIHT. Residue Asn208 is glycosylated (N-linked (GlcNAc...) asparagine; by host). The segment at 237-244 is involved in fusion and/or binding to host membrane; it reads GSTWLYRE. Asn281, Asn286, Asn302, Asn341, Asn383, Asn405, Asn409, Asn417, Asn447, Asn452, Asn456, Asn466, Asn555, and Asn586 each carry an N-linked (GlcNAc...) asparagine; by host glycan. A disulfide bond links Cys574 and Cys611. The hydrophobic membrane proximal region stretch occupies residues 697–749; it reads VEDKVVDPLPPYLKGLDDLMSGLGAAGKAVGVAIGAVGGAVASVVEGVATFLK. Residues 752-772 form a helical membrane-spanning segment; it reads FGAFTIILVAIAVVIITYLIY. Over 773–907 the chain is Intravirion; the sequence is TRQRRLCTQP…LKDSDEEENV (135 aa). Polar residues-rich tracts occupy residues 798–810 and 860–877; these read VTSGSTKDTSLQA and RAQQNGTDSLDGRTGTQD. Disordered regions lie at residues 798–838 and 857–907; these read VTSG…TAAP and AEQR…EENV. A compositionally biased stretch (basic and acidic residues) spans 878-887; sequence KGQKPNLLDR. Residues 895–898 carry the Internalization motif motif; it reads YRHL.

This sequence belongs to the herpesviridae glycoprotein B family. As to quaternary structure, homotrimer; disulfide-linked. Binds to heparan sulfate proteoglycans. Interacts with gH/gL heterodimer. In terms of processing, a proteolytic cleavage by host furin generates two subunits that remain linked by disulfide bonds.

Its subcellular location is the virion membrane. It is found in the host cell membrane. It localises to the host endosome membrane. The protein localises to the host Golgi apparatus membrane. Its function is as follows. Envelope glycoprotein that forms spikes at the surface of virion envelope. Essential for the initial attachment to heparan sulfate moieties of the host cell surface proteoglycans. Involved in fusion of viral and cellular membranes leading to virus entry into the host cell. Following initial binding to its host receptors, membrane fusion is mediated by the fusion machinery composed at least of gB and the heterodimer gH/gL. May be involved in the fusion between the virion envelope and the outer nuclear membrane during virion egress. The chain is Envelope glycoprotein B from Human cytomegalovirus (strain Merlin) (HHV-5).